We begin with the raw amino-acid sequence, 132 residues long: Small ribosomal subunit protein uS8c (132 aa).

It belongs to the universal ribosomal protein uS8 family. Part of the 30S ribosomal subunit.

It localises to the plastid. The protein resides in the chloroplast. One of the primary rRNA binding proteins, it binds directly to 16S rRNA central domain where it helps coordinate assembly of the platform of the 30S subunit. This is Small ribosomal subunit protein uS8c (rps8) from Rhodomonas salina (Cryptomonas salina).